The primary structure comprises 71 residues: SPI-2 type 3 secretion system needle filament protein (71 aa).

Belongs to the SctF family. As to quaternary structure, the core secretion machinery of the T3SS is composed of approximately 20 different proteins, including cytoplasmic components, a base, an export apparatus and a needle. This subunit polymerizes and forms the helical needle filament.

The protein resides in the secreted. Its subcellular location is the cell surface. Component of the type III secretion system (T3SS), also called injectisome, which is used to inject bacterial effector proteins into eukaryotic host cells. SsaG/SctF2 forms the external needle filament that protrudes from the bacterial surface. In terms of biological role, during infection, can induce innate immune responses. The needle proteins interact with host TLR2 or TLR4, and induce signaling by NF-kappa-B and/or AP-1. This activation is MyD88 dependent and results in increased expression of cytokines, including TNF-alpha, IL-6 and IL-8. This is SPI-2 type 3 secretion system needle filament protein from Salmonella typhimurium (strain LT2 / SGSC1412 / ATCC 700720).